Consider the following 115-residue polypeptide: NADH-ubiquinone oxidoreductase chain 3 (115 aa).

Helical transmembrane passes span 4-24 (IMAMLANISISSCLIIIAFWL), 55-75 (FFLVGITFLLFDLEIALLLPL), and 84-104 (MFLTTLTSFILVSVLALGLAY).

The protein belongs to the complex I subunit 3 family. As to quaternary structure, core subunit of respiratory chain NADH dehydrogenase (Complex I) which is composed of 45 different subunits. Interacts with TMEM186. Interacts with TMEM242.

The protein localises to the mitochondrion inner membrane. The catalysed reaction is a ubiquinone + NADH + 5 H(+)(in) = a ubiquinol + NAD(+) + 4 H(+)(out). Core subunit of the mitochondrial membrane respiratory chain NADH dehydrogenase (Complex I) which catalyzes electron transfer from NADH through the respiratory chain, using ubiquinone as an electron acceptor. Essential for the catalytic activity of complex I. In Phyllotis darwinii (Darwin's leaf-eared mouse), this protein is NADH-ubiquinone oxidoreductase chain 3.